Consider the following 194-residue polypeptide: MASAAASESSSSSSSSSAGAANGQSAGESGGGGAQDSTFECNICLDTSKDAVISLCGHLFCWPCLHQWLETRPNRQVCPVCKAGISRDKVIPLYGRGSTGQQDPREKTPPRPQGQRPEPENRGGFQGFGFGDGGFQMSFGIGAFPFGIFATAFNINDGRPPPAAPGTPQHTDEQFLSRLFLFVALLIMFWLLIA.

Residues 1-27 (MASAAASESSSSSSSSSAGAANGQSAG) show a composition bias toward low complexity. A disordered region spans residues 1-32 (MASAAASESSSSSSSSSAGAANGQSAGESGGG). The segment at 31-82 (GGGAQDSTFECNICLDTSKDAVISLCGHLFCWPCLHQWLETRPNRQVCPVCK) is required for ubiquitin ligase activity and protection against ER stress-induced cell death. The RING-type zinc finger occupies 41–82 (CNICLDTSKDAVISLCGHLFCWPCLHQWLETRPNRQVCPVCK). The tract at residues 92–126 (PLYGRGSTGQQDPREKTPPRPQGQRPEPENRGGFQ) is disordered. 2 helical membrane-spanning segments follow: residues 133–153 (GGFQ…ATAF) and 174–194 (QFLS…LLIA).

It is found in the mitochondrion outer membrane. The protein localises to the endoplasmic reticulum membrane. The catalysed reaction is S-ubiquitinyl-[E2 ubiquitin-conjugating enzyme]-L-cysteine + [acceptor protein]-L-lysine = [E2 ubiquitin-conjugating enzyme]-L-cysteine + N(6)-ubiquitinyl-[acceptor protein]-L-lysine.. The protein operates within protein modification; protein ubiquitination. E3 ubiquitin-protein ligase that regulates selective mitochondrial autophagy by mediating 'Lys-63'-linked polyubiquitination. Acts in the endoplasmic reticulum (ER)-associated degradation (ERAD) pathway, which targets misfolded proteins that accumulate in the endoplasmic reticulum (ER) for ubiquitination and subsequent proteasome-mediated degradation. Protects cells from ER stress-induced apoptosis. Responsible for the cotranslational ubiquitination and degradation of CFTR in the ERAD pathway. Also acts as a regulator of the innate antiviral response by catalyzing 'Lys-27'-linked polyubiquitination of CGAS, thereby promoting CGAS cyclic GMP-AMP synthase activity. Preferentially associates with the E2 enzymes UBE2J1 and UBE2J2. The sequence is that of E3 ubiquitin-protein ligase RNF185 (rnf185) from Danio rerio (Zebrafish).